Here is a 206-residue protein sequence, read N- to C-terminus: Probable GTP-binding protein EngB (206 aa).

An EngB-type G domain is found at 27–201 (SGIEVAFAGR…EEKLNQWYSK (175 aa)). GTP is bound by residues 35–42 (GRSNAGKS), 62–66 (GRTQL), 80–83 (DLPG), 147–150 (TKAD), and 180–182 (FSS). Mg(2+) contacts are provided by serine 42 and threonine 64.

It belongs to the TRAFAC class TrmE-Era-EngA-EngB-Septin-like GTPase superfamily. EngB GTPase family. Mg(2+) serves as cofactor.

Its function is as follows. Necessary for normal cell division and for the maintenance of normal septation. The chain is Probable GTP-binding protein EngB from Idiomarina loihiensis (strain ATCC BAA-735 / DSM 15497 / L2-TR).